The following is a 412-amino-acid chain: Serine hydroxymethyltransferase (412 aa).

Residues L117 and 121–123 (GHL) each bind (6S)-5,6,7,8-tetrahydrofolate. K226 carries the post-translational modification N6-(pyridoxal phosphate)lysine.

It belongs to the SHMT family. Homodimer. It depends on pyridoxal 5'-phosphate as a cofactor.

It is found in the cytoplasm. It carries out the reaction (6R)-5,10-methylene-5,6,7,8-tetrahydrofolate + glycine + H2O = (6S)-5,6,7,8-tetrahydrofolate + L-serine. It participates in one-carbon metabolism; tetrahydrofolate interconversion. It functions in the pathway amino-acid biosynthesis; glycine biosynthesis; glycine from L-serine: step 1/1. Its function is as follows. Catalyzes the reversible interconversion of serine and glycine with tetrahydrofolate (THF) serving as the one-carbon carrier. This reaction serves as the major source of one-carbon groups required for the biosynthesis of purines, thymidylate, methionine, and other important biomolecules. Also exhibits THF-independent aldolase activity toward beta-hydroxyamino acids, producing glycine and aldehydes, via a retro-aldol mechanism. The chain is Serine hydroxymethyltransferase from Symbiobacterium thermophilum (strain DSM 24528 / JCM 14929 / IAM 14863 / T).